Consider the following 100-residue polypeptide: Aspartyl/glutamyl-tRNA(Asn/Gln) amidotransferase subunit C (100 aa).

Belongs to the GatC family. As to quaternary structure, heterotrimer of A, B and C subunits.

The catalysed reaction is L-glutamyl-tRNA(Gln) + L-glutamine + ATP + H2O = L-glutaminyl-tRNA(Gln) + L-glutamate + ADP + phosphate + H(+). The enzyme catalyses L-aspartyl-tRNA(Asn) + L-glutamine + ATP + H2O = L-asparaginyl-tRNA(Asn) + L-glutamate + ADP + phosphate + 2 H(+). Functionally, allows the formation of correctly charged Asn-tRNA(Asn) or Gln-tRNA(Gln) through the transamidation of misacylated Asp-tRNA(Asn) or Glu-tRNA(Gln) in organisms which lack either or both of asparaginyl-tRNA or glutaminyl-tRNA synthetases. The reaction takes place in the presence of glutamine and ATP through an activated phospho-Asp-tRNA(Asn) or phospho-Glu-tRNA(Gln). The protein is Aspartyl/glutamyl-tRNA(Asn/Gln) amidotransferase subunit C of Streptococcus uberis (strain ATCC BAA-854 / 0140J).